Reading from the N-terminus, the 179-residue chain is Large ribosomal subunit protein uL5 (179 aa).

It belongs to the universal ribosomal protein uL5 family. Part of the 50S ribosomal subunit; part of the 5S rRNA/L5/L18/L25 subcomplex. Contacts the 5S rRNA and the P site tRNA. Forms a bridge to the 30S subunit in the 70S ribosome.

In terms of biological role, this is one of the proteins that bind and probably mediate the attachment of the 5S RNA into the large ribosomal subunit, where it forms part of the central protuberance. In the 70S ribosome it contacts protein S13 of the 30S subunit (bridge B1b), connecting the 2 subunits; this bridge is implicated in subunit movement. Contacts the P site tRNA; the 5S rRNA and some of its associated proteins might help stabilize positioning of ribosome-bound tRNAs. The polypeptide is Large ribosomal subunit protein uL5 (Chromohalobacter salexigens (strain ATCC BAA-138 / DSM 3043 / CIP 106854 / NCIMB 13768 / 1H11)).